A 358-amino-acid chain; its full sequence is MRKIIHIDMDCYFAAVEMRDFPEYRGKPLAVGGSRERRGVISTCSYEARKFGVRSAMATSYAFKLCPNLILVPGRMQVYKEVSLHIREIFSRYTPLIEPLSLDEAYLDVSECQQYKGSATLIAEAIRRDILAETGLTASAGIAPVKFLAKVASDLNKPNGQYVITPEMLPEFVKTLSLRKIPGVGKVTAEKLTSLGLNTCGDVQVYSKQELLSRFGKLGAVLIERAHGIDGRGISIDRERKSVGVETTLAKDIYTLEQCQQVMPGLIQELALRLSRSAKDRKIHKQVVKLKFSDFKQTTIEHRTEEVSVNLFYDLLTQALARQDARGIRLVGISVGLADSTLYVASTLNTQTQLDLAL.

One can recognise a UmuC domain in the interval 4–185 (IIHIDMDCYF…LSLRKIPGVG (182 aa)). The Mg(2+) site is built by aspartate 8 and aspartate 103. The active site involves glutamate 104.

It belongs to the DNA polymerase type-Y family. In terms of assembly, monomer. Mg(2+) serves as cofactor.

It is found in the cytoplasm. It catalyses the reaction DNA(n) + a 2'-deoxyribonucleoside 5'-triphosphate = DNA(n+1) + diphosphate. Functionally, poorly processive, error-prone DNA polymerase involved in untargeted mutagenesis. Copies undamaged DNA at stalled replication forks, which arise in vivo from mismatched or misaligned primer ends. These misaligned primers can be extended by PolIV. Exhibits no 3'-5' exonuclease (proofreading) activity. May be involved in translesional synthesis, in conjunction with the beta clamp from PolIII. This is DNA polymerase IV from Shewanella sp. (strain W3-18-1).